Reading from the N-terminus, the 432-residue chain is D-amino acid dehydrogenase (432 aa).

Residue 3-17 (VVILGSGVVGVTSAW) coordinates FAD.

The protein belongs to the DadA oxidoreductase family. Requires FAD as cofactor.

The enzyme catalyses a D-alpha-amino acid + A + H2O = a 2-oxocarboxylate + AH2 + NH4(+). It participates in amino-acid degradation; D-alanine degradation; NH(3) and pyruvate from D-alanine: step 1/1. Functionally, oxidative deamination of D-amino acids. The chain is D-amino acid dehydrogenase from Salmonella arizonae (strain ATCC BAA-731 / CDC346-86 / RSK2980).